The primary structure comprises 194 residues: RNA polymerase II subunit A C-terminal domain phosphatase SSU72 like protein 1 (194 aa).

The protein belongs to the SSU72 phosphatase family.

It localises to the nucleus. It carries out the reaction O-phospho-L-seryl-[protein] + H2O = L-seryl-[protein] + phosphate. The catalysed reaction is O-phospho-L-threonyl-[protein] + H2O = L-threonyl-[protein] + phosphate. Protein phosphatase that catalyzes the dephosphorylation of the C-terminal domain of RNA polymerase II. Plays a role in RNA processing and termination. The polypeptide is RNA polymerase II subunit A C-terminal domain phosphatase SSU72 like protein 1 (Homo sapiens (Human)).